A 274-amino-acid polypeptide reads, in one-letter code: Exosome complex component RRP40 (274 aa).

Ala2 carries the post-translational modification N-acetylalanine. Lys150 participates in a covalent cross-link: Glycyl lysine isopeptide (Lys-Gly) (interchain with G-Cter in SUMO2).

It belongs to the RRP40 family. Component of the RNA exosome core complex (Exo-9), composed of EXOSC1, EXOSC2, EXOSC3, EXOSC4, EXOSC5, EXOSC6, EXOSC7, EXOSC8 and EXOSC9; within the complex interacts with EXOSC5 and EXOSC9. The catalytically inactive RNA exosome core complex (Exo-9) associates with the catalytic subunit EXOSC10/RRP6. Exo-9 may associate with DIS3 to form the nucleolar exosome complex, or DIS3L to form the cytoplasmic exosome complex. Exo-9 is formed by a hexameric base ring consisting of the heterodimers EXOSC4-EXOSC9, EXOSC5-EXOSC8 and EXOSC6-EXOSC7, and a cap ring consisting of EXOSC1, EXOSC2 and EXOSC3. The RNA exosome complex associates with cofactors C1D/RRP47, MPHOSPH6/MPP6 and MTREX/MTR4. Interacts with MPHOSPH6/MPP6; the interaction is direct. Interacts with GTPBP1. Interacts with ZC3HAV1. Interacts with DDX17 only in the presence of ZC3HAV1 in an RNA-independent manner. Interacts with DHX36; this interaction occurs in a RNase-insensitive manner. Interacts with HBS1L isoform 2.

It is found in the cytoplasm. The protein localises to the nucleus. Its subcellular location is the nucleolus. In terms of biological role, non-catalytic component of the RNA exosome complex which has 3'-&gt;5' exoribonuclease activity and participates in a multitude of cellular RNA processing and degradation events. In the nucleus, the RNA exosome complex is involved in proper maturation of stable RNA species such as rRNA, snRNA and snoRNA, in the elimination of RNA processing by-products and non-coding 'pervasive' transcripts, such as antisense RNA species and promoter-upstream transcripts (PROMPTs), and of mRNAs with processing defects, thereby limiting or excluding their export to the cytoplasm. The RNA exosome may be involved in Ig class switch recombination (CSR) and/or Ig variable region somatic hypermutation (SHM) by targeting AICDA deamination activity to transcribed dsDNA substrates. In the cytoplasm, the RNA exosome complex is involved in general mRNA turnover and specifically degrades inherently unstable mRNAs containing AU-rich elements (AREs) within their 3' untranslated regions, and in RNA surveillance pathways, preventing translation of aberrant mRNAs. It seems to be involved in degradation of histone mRNA. The catalytic inactive RNA exosome core complex of 9 subunits (Exo-9) is proposed to play a pivotal role in the binding and presentation of RNA for ribonucleolysis, and to serve as a scaffold for the association with catalytic subunits and accessory proteins or complexes. EXOSC3 as peripheral part of the Exo-9 complex stabilizes the hexameric ring of RNase PH-domain subunits through contacts with EXOSC9 and EXOSC5. In Mus musculus (Mouse), this protein is Exosome complex component RRP40 (Exosc3).